A 62-amino-acid polypeptide reads, in one-letter code: Large ribosomal subunit protein bL35 (62 aa).

The span at 1 to 26 (MPKMKTKSGLKKRIKITATGKVKRGN) shows a compositional bias: basic residues. A disordered region spans residues 1–62 (MPKMKTKSGL…SDFKRYKELI (62 aa)). Basic and acidic residues predominate over residues 53–62 (SDFKRYKELI).

It belongs to the bacterial ribosomal protein bL35 family.

This is Large ribosomal subunit protein bL35 from Metamycoplasma arthritidis (strain 158L3-1) (Mycoplasma arthritidis).